A 232-amino-acid polypeptide reads, in one-letter code: LexA repressor (232 aa).

A DNA-binding region (H-T-H motif) is located at residues 26-46; it reads FDEMKDALDLRSKSGIHRLIT. Residues S153 and K191 each act as for autocatalytic cleavage activity in the active site.

Belongs to the peptidase S24 family. In terms of assembly, homodimer.

The enzyme catalyses Hydrolysis of Ala-|-Gly bond in repressor LexA.. Its function is as follows. Represses a number of genes involved in the response to DNA damage (SOS response), including recA and lexA. In the presence of single-stranded DNA, RecA interacts with LexA causing an autocatalytic cleavage which disrupts the DNA-binding part of LexA, leading to derepression of the SOS regulon and eventually DNA repair. This chain is LexA repressor, found in Bradyrhizobium sp. (strain ORS 278).